The following is a 197-amino-acid chain: MFDQLVLASNNAGKLKEFGALFAELGVTVRPQRDFDVPECPEPHHTFLENALEKARHASRLTGLPALADDSGICVEALGGAPGVFSARFAGEPKSDARNNALLVEKLQGEANRRAWYYCVLVLVRHADDPQPLVADGIWLGEVRDEAAGEGGFGYDPHFHLPGYGVSVAELDAAEKNRVSHRGQALAALMAKLKALA.

Position 9–14 (9–14 (SNNAGK)) interacts with substrate. Catalysis depends on Asp-70, which acts as the Proton acceptor. Asp-70 lines the Mg(2+) pocket. Substrate-binding positions include Ser-71, 153–156 (FGYD), Lys-176, and 181–182 (HR).

Belongs to the HAM1 NTPase family. Homodimer. Mg(2+) serves as cofactor.

The enzyme catalyses XTP + H2O = XMP + diphosphate + H(+). It carries out the reaction dITP + H2O = dIMP + diphosphate + H(+). The catalysed reaction is ITP + H2O = IMP + diphosphate + H(+). In terms of biological role, pyrophosphatase that catalyzes the hydrolysis of nucleoside triphosphates to their monophosphate derivatives, with a high preference for the non-canonical purine nucleotides XTP (xanthosine triphosphate), dITP (deoxyinosine triphosphate) and ITP. Seems to function as a house-cleaning enzyme that removes non-canonical purine nucleotides from the nucleotide pool, thus preventing their incorporation into DNA/RNA and avoiding chromosomal lesions. The polypeptide is dITP/XTP pyrophosphatase (Chromobacterium violaceum (strain ATCC 12472 / DSM 30191 / JCM 1249 / CCUG 213 / NBRC 12614 / NCIMB 9131 / NCTC 9757 / MK)).